The sequence spans 551 residues: Intestinal-type alkaline phosphatase 2 (551 aa).

The signal sequence occupies residues 1 to 19 (MQGAWVLLLLGFRLQLSLS). Position 61 (Asp61) interacts with Mg(2+). Residues Asp61 and Ser111 each coordinate Zn(2+). Residue Ser111 is the Phosphoserine intermediate of the active site. Cys140 and Cys202 are oxidised to a cystine. Asn141 carries N-linked (GlcNAc...) asparagine glycosylation. Residue Ser174 coordinates Mg(2+). Glu235 provides a ligand contact to Ca(2+). A glycan (N-linked (GlcNAc...) asparagine) is linked at Asn241. Positions 288, 289, and 304 each coordinate Ca(2+). Mg(2+) is bound at residue Glu330. Asp335, His339, Asp376, and His377 together coordinate Zn(2+). Asn426 carries N-linked (GlcNAc...) asparagine glycosylation. Cys485 and Cys492 form a disulfide bridge. Residues 496-537 (PPADENRPTTPVQNSTTTTTTTTTTTTTTTTTRVQNSASSLG) are disordered. Asn509 is a glycosylation site (N-linked (GlcNAc...) asparagine). Residues 511-527 (TTTTTTTTTTTTTTTTT) show a composition bias toward low complexity. Residues 528–537 (RVQNSASSLG) show a composition bias toward polar residues. Asn531 is lipidated: GPI-anchor amidated asparagine. A propeptide spans 532 to 551 (SASSLGPATAPLAWHYWPRR) (removed in mature form).

The protein belongs to the alkaline phosphatase family. As to quaternary structure, homodimer. Mg(2+) serves as cofactor. Zn(2+) is required as a cofactor. Requires Ca(2+) as cofactor.

The protein resides in the cell membrane. The catalysed reaction is a phosphate monoester + H2O = an alcohol + phosphate. Its function is as follows. Alkaline phosphatase that can hydrolyze various phosphate compounds. The sequence is that of Intestinal-type alkaline phosphatase 2 from Rattus norvegicus (Rat).